We begin with the raw amino-acid sequence, 388 residues long: Protein-glutamate methylesterase/protein-glutamine glutaminase 4 (388 aa).

The Response regulatory domain maps to 4 to 121 (KVLVVDDSGF…SGDASKIKRL (118 aa)). At Asp-55 the chain carries 4-aspartylphosphate. The tract at residues 137 to 196 (SGASAPASVPQPAKPAAPIPVREPPKPAAPVTRPAEPRAKAPPAKPEPKPEVKAAKSRRT) is disordered. A compositionally biased stretch (pro residues) spans 148–164 (PAKPAAPIPVREPPKPA). The region spanning 197 to 388 (PRQDYKVVLI…FAPRLIDGVG (192 aa)) is the CheB-type methylesterase domain. Residues Ser-209, His-236, and Asp-332 contribute to the active site.

It belongs to the CheB family. Post-translationally, phosphorylated by CheA. Phosphorylation of the N-terminal regulatory domain activates the methylesterase activity.

The protein resides in the cytoplasm. It carries out the reaction [protein]-L-glutamate 5-O-methyl ester + H2O = L-glutamyl-[protein] + methanol + H(+). The catalysed reaction is L-glutaminyl-[protein] + H2O = L-glutamyl-[protein] + NH4(+). Involved in chemotaxis. Part of a chemotaxis signal transduction system that modulates chemotaxis in response to various stimuli. Catalyzes the demethylation of specific methylglutamate residues introduced into the chemoreceptors (methyl-accepting chemotaxis proteins or MCP) by CheR. Also mediates the irreversible deamidation of specific glutamine residues to glutamic acid. The protein is Protein-glutamate methylesterase/protein-glutamine glutaminase 4 of Hahella chejuensis (strain KCTC 2396).